A 603-amino-acid chain; its full sequence is Isocitrate dehydrogenase kinase/phosphatase (603 aa).

Residues 327–333 and Lys-348 each bind ATP; that span reads APGIKGL. Residue Asp-383 is part of the active site.

This sequence belongs to the AceK family.

The protein resides in the cytoplasm. The enzyme catalyses L-seryl-[isocitrate dehydrogenase] + ATP = O-phospho-L-seryl-[isocitrate dehydrogenase] + ADP + H(+). In terms of biological role, bifunctional enzyme which can phosphorylate or dephosphorylate isocitrate dehydrogenase (IDH) on a specific serine residue. This is a regulatory mechanism which enables bacteria to bypass the Krebs cycle via the glyoxylate shunt in response to the source of carbon. When bacteria are grown on glucose, IDH is fully active and unphosphorylated, but when grown on acetate or ethanol, the activity of IDH declines drastically concomitant with its phosphorylation. This is Isocitrate dehydrogenase kinase/phosphatase from Burkholderia thailandensis (strain ATCC 700388 / DSM 13276 / CCUG 48851 / CIP 106301 / E264).